Consider the following 98-residue polypeptide: Thrombin-like enzyme cerastotin (98 aa).

Residues 1-98 form the Peptidase S1 domain; the sequence is VIGGAECNIN…IKKPVNGSTH (98 aa). Residues His-41 and Asp-85 each act as charge relay system in the active site. Asn-94 carries N-linked (GlcNAc...) asparagine glycosylation.

This sequence belongs to the peptidase S1 family. Snake venom subfamily. Monomer. Expressed by the venom gland.

It localises to the secreted. With respect to regulation, inhibited by PMSF. Its function is as follows. Thrombin-like snake venom serine protease that preferentially cleaves the alpha-chain of fibrinogen (FGA). Induce platelet aggregation in the presence of exogenous fibrinogen. Possesses esterase and amidolytic activities. This chain is Thrombin-like enzyme cerastotin, found in Cerastes cerastes (Horned desert viper).